A 244-amino-acid polypeptide reads, in one-letter code: Phosphoadenosine 5'-phosphosulfate reductase (244 aa).

Cys239 functions as the Nucleophile; cysteine thiosulfonate intermediate in the catalytic mechanism.

It belongs to the PAPS reductase family. CysH subfamily.

It localises to the cytoplasm. The enzyme catalyses [thioredoxin]-disulfide + sulfite + adenosine 3',5'-bisphosphate + 2 H(+) = [thioredoxin]-dithiol + 3'-phosphoadenylyl sulfate. It functions in the pathway sulfur metabolism; hydrogen sulfide biosynthesis; sulfite from sulfate: step 3/3. Its function is as follows. Catalyzes the formation of sulfite from phosphoadenosine 5'-phosphosulfate (PAPS) using thioredoxin as an electron donor. This Shigella flexneri serotype 5b (strain 8401) protein is Phosphoadenosine 5'-phosphosulfate reductase.